The chain runs to 640 residues: 1-deoxy-D-xylulose-5-phosphate synthase (640 aa).

Residues His79 and 120–122 (AHS) each bind thiamine diphosphate. Asp151 is a binding site for Mg(2+). Thiamine diphosphate-binding positions include 152–153 (GA), Asn180, Tyr289, and Glu371. Asn180 serves as a coordination point for Mg(2+).

It belongs to the transketolase family. DXPS subfamily. Homodimer. The cofactor is Mg(2+). It depends on thiamine diphosphate as a cofactor.

The enzyme catalyses D-glyceraldehyde 3-phosphate + pyruvate + H(+) = 1-deoxy-D-xylulose 5-phosphate + CO2. It participates in metabolic intermediate biosynthesis; 1-deoxy-D-xylulose 5-phosphate biosynthesis; 1-deoxy-D-xylulose 5-phosphate from D-glyceraldehyde 3-phosphate and pyruvate: step 1/1. Its function is as follows. Catalyzes the acyloin condensation reaction between C atoms 2 and 3 of pyruvate and glyceraldehyde 3-phosphate to yield 1-deoxy-D-xylulose-5-phosphate (DXP). This chain is 1-deoxy-D-xylulose-5-phosphate synthase, found in Erythrobacter litoralis (strain HTCC2594).